A 44-amino-acid polypeptide reads, in one-letter code: Photosystem I reaction center subunit IX (44 aa).

A helical membrane pass occupies residues 7–27; the sequence is YLSAAPVLSTIWFGALAGLLI.

Belongs to the PsaJ family.

The protein localises to the plastid. It localises to the chloroplast thylakoid membrane. May help in the organization of the PsaE and PsaF subunits. In Pelargonium hortorum (Common geranium), this protein is Photosystem I reaction center subunit IX.